A 150-amino-acid polypeptide reads, in one-letter code: Phosphoribosyl-AMP cyclohydrolase (150 aa).

Asp-93 provides a ligand contact to Mg(2+). Cys-94 provides a ligand contact to Zn(2+). Asp-95 and Asp-97 together coordinate Mg(2+). Zn(2+)-binding residues include Cys-112 and Cys-119.

It belongs to the PRA-CH family. Homodimer. It depends on Mg(2+) as a cofactor. Zn(2+) is required as a cofactor.

It localises to the cytoplasm. The catalysed reaction is 1-(5-phospho-beta-D-ribosyl)-5'-AMP + H2O = 1-(5-phospho-beta-D-ribosyl)-5-[(5-phospho-beta-D-ribosylamino)methylideneamino]imidazole-4-carboxamide. It functions in the pathway amino-acid biosynthesis; L-histidine biosynthesis; L-histidine from 5-phospho-alpha-D-ribose 1-diphosphate: step 3/9. Catalyzes the hydrolysis of the adenine ring of phosphoribosyl-AMP. The chain is Phosphoribosyl-AMP cyclohydrolase from Rhizobium etli (strain CIAT 652).